Consider the following 511-residue polypeptide: Ectonucleoside triphosphate diphosphohydrolase 1 (511 aa).

Residues Met1–Asn16 lie on the Cytoplasmic side of the membrane. Residues Ile17–Leu37 traverse the membrane as a helical segment. Topologically, residues Thr38 to Tyr478 are extracellular. Positions Asn46–Gly171 are N-terminal lobe. A glycan (N-linked (GlcNAc...) asparagine) is linked at Asn73. A disulfide bond links Cys84 and Cys108. Glu174 serves as the catalytic Proton acceptor. The tract at residues Gln205 to Met441 is C-terminal lobe. N-linked (GlcNAc...) asparagine glycans are attached at residues Asn226, Asn291, and Asn333. 2 cysteine pairs are disulfide-bonded: Cys254/Cys300 and Cys281/Cys324. An intrachain disulfide couples Cys337 to Cys342. N-linked (GlcNAc...) asparagine glycosylation is present at Asn374. An intrachain disulfide couples Cys391 to Cys414. N-linked (GlcNAc...) asparagine glycans are attached at residues Asn429 and Asn458. A helical transmembrane segment spans residues Ile479–Ile499. The Cytoplasmic portion of the chain corresponds to Phe500 to Val511.

It belongs to the GDA1/CD39 NTPase family. In terms of assembly, homodimer; disulfide-linked. Ca(2+) is required as a cofactor. The cofactor is Mg(2+). In terms of processing, N-glycosylated. Post-translationally, the N-terminus is blocked. Palmitoylated on Cys-13; which is required for caveola targeting. In terms of tissue distribution, expressed in primary neurons and astrocytes, kidney, liver, muscle, thymus, lung and spleen.

Its subcellular location is the membrane. The protein localises to the caveola. It catalyses the reaction a ribonucleoside 5'-triphosphate + 2 H2O = a ribonucleoside 5'-phosphate + 2 phosphate + 2 H(+). It carries out the reaction a ribonucleoside 5'-triphosphate + H2O = a ribonucleoside 5'-diphosphate + phosphate + H(+). The enzyme catalyses a ribonucleoside 5'-diphosphate + H2O = a ribonucleoside 5'-phosphate + phosphate + H(+). The catalysed reaction is ATP + 2 H2O = AMP + 2 phosphate + 2 H(+). It catalyses the reaction ATP + H2O = ADP + phosphate + H(+). It carries out the reaction ADP + H2O = AMP + phosphate + H(+). The enzyme catalyses CTP + 2 H2O = CMP + 2 phosphate + 2 H(+). The catalysed reaction is CTP + H2O = CDP + phosphate + H(+). It catalyses the reaction CDP + H2O = CMP + phosphate + H(+). It carries out the reaction GTP + 2 H2O = GMP + 2 phosphate + 2 H(+). The enzyme catalyses GTP + H2O = GDP + phosphate + H(+). The catalysed reaction is GDP + H2O = GMP + phosphate + H(+). It catalyses the reaction ITP + 2 H2O = IMP + 2 phosphate + 2 H(+). It carries out the reaction ITP + H2O = IDP + phosphate + H(+). The enzyme catalyses IDP + H2O = IMP + phosphate + H(+). The catalysed reaction is UTP + 2 H2O = UMP + 2 phosphate + 2 H(+). It catalyses the reaction UTP + H2O = UDP + phosphate + H(+). It carries out the reaction UDP + H2O = UMP + phosphate + H(+). Functionally, catalyzes the hydrolysis of both di- and triphosphate nucleotides (NDPs and NTPs) and hydrolyze NTPs to nucleotide monophosphates (NMPs) in two distinct successive phosphate-releasing steps, with NDPs as intermediates and participates in the regulation of extracellular levels of nucleotides. By hydrolyzing proinflammatory ATP and platelet-activating ADP to AMP, it blocks platelet aggregation and supports blood flow. The chain is Ectonucleoside triphosphate diphosphohydrolase 1 from Rattus norvegicus (Rat).